Here is a 297-residue protein sequence, read N- to C-terminus: Superoxide dismutase 1 copper chaperone (297 aa).

Cu cation is bound at residue Cys11. The segment at 222-263 (GSSCCSKKDSSPSEKPSCCSQEKKSCCSSKKPSCCSQEKKGC) is disordered. Residues 234-257 (SEKPSCCSQEKKSCCSSKKPSCCS) show a composition bias toward low complexity.

The protein belongs to the CCS1 family.

It is found in the cytoplasm. Copper chaperone for superoxide dismutase 1 (sod1). Binds copper ions and delivers them specifically to sod1. Also has a role in cell protection against copper ion toxicity during conditions of copper excess. The C-terminal region is thought to act specifically in this sequestration role. In Schizosaccharomyces pombe (strain 972 / ATCC 24843) (Fission yeast), this protein is Superoxide dismutase 1 copper chaperone (ccs1).